Reading from the N-terminus, the 442-residue chain is uncharacterized protein (442 aa).

One can recognise an ABC transporter domain in the interval 1 to 238 (MKAEGLSGGY…QSIKAVYDTD (238 aa)). 33 to 40 (GPNGSGKT) lines the ATP pocket.

Belongs to the ABC transporter superfamily. The complex is composed of two ATP-binding proteins (YvrA), two transmembrane proteins (YvrB) and a solute-binding protein (YvrC).

In terms of biological role, probably part of an ABC transporter complex. Probably responsible for energy coupling to the transport system. This is an uncharacterized protein from Bacillus subtilis (strain 168).